The sequence spans 63 residues: Large ribosomal subunit protein uL30 (63 aa).

It belongs to the universal ribosomal protein uL30 family. In terms of assembly, part of the 50S ribosomal subunit.

This chain is Large ribosomal subunit protein uL30, found in Xanthomonas campestris pv. campestris (strain 8004).